Here is a 294-residue protein sequence, read N- to C-terminus: Tetraspanin-15 (294 aa).

At 1–23 the chain is on the cytoplasmic side; the sequence is MPRGDSEQVRYCARFSYLWLKFS. The helical transmembrane segment at 24 to 44 threads the bilayer; sequence LIIYSTVFWLIGALVLSVGIY. Topologically, residues 45–62 are extracellular; it reads AEVERQKYKTLESAFLAP. Residues 63-83 form a helical membrane-spanning segment; that stretch reads AIILILLGVVMFMVSFIGVLA. Residues 84 to 93 lie on the Cytoplasmic side of the membrane; it reads SLRDNLYLLQ. A helical membrane pass occupies residues 94 to 114; it reads AFMYILGICLIMELIGGVVAL. Over 115-235 the chain is Extracellular; the sequence is TFRNQTIDFL…WFMDNYTIMA (121 aa). An N-linked (GlcNAc...) asparagine glycan is attached at Asn-118. 4 disulfide bridges follow: Cys-154–Cys-219, Cys-155–Cys-185, Cys-171–Cys-179, and Cys-186–Cys-198. Residues Asn-189 and Asn-230 are each glycosylated (N-linked (GlcNAc...) asparagine). Residues 236–256 traverse the membrane as a helical segment; it reads GILLGILLPQFLGVLLTLLYI. Topologically, residues 257 to 294 are cytoplasmic; that stretch reads TRVEDIIMEHSVTDGLLGPGAKPSVEAAGTGCCLCYPN.

Belongs to the tetraspanin (TM4SF) family. As to quaternary structure, interacts with ADAM10; the interaction influences ADAM10 substrate specificity, endocytosis and turnover. Post-translationally, palmitoylated.

The protein localises to the cell membrane. The protein resides in the late endosome membrane. Part of TspanC8 subgroup, composed of 6 members that interact with the transmembrane metalloprotease ADAM10. This interaction is required for ADAM10 exit from the endoplasmic reticulum and for enzymatic maturation and trafficking to the cell surface as well as substrate specificity. Different TspanC8/ADAM10 complexes have distinct substrates. Promotes ADAM10-mediated cleavage of CDH2. Negatively regulates ligand-induced Notch activity probably by regulating ADAM10 activity. In Homo sapiens (Human), this protein is Tetraspanin-15.